A 286-amino-acid chain; its full sequence is UPF0761 membrane protein KPK_5501 (286 aa).

Helical transmembrane passes span 44-64 (LLSLVPLIAVVFALFAAFPMF), 74-94 (FIFANFIPATGDVIQGYIEQF), 104-124 (VGAFGLIVTSLLLMYSIDSAL), 140-160 (FAVYWMILTLGPLLAGASLAI), 183-203 (LFPLILSWAAFWLLYSIVPTT), 210-230 (AVIGALVAALLFEAGKKAFAL), and 244-264 (VISVVPILFVWVYWTWCIVLL).

It belongs to the UPF0761 family.

Its subcellular location is the cell inner membrane. This chain is UPF0761 membrane protein KPK_5501, found in Klebsiella pneumoniae (strain 342).